Reading from the N-terminus, the 329-residue chain is Intradiol ring-cleavage dioxygenase hqdA (329 aa).

Residues Tyr167, Tyr201, His225, and His227 each contribute to the Fe cation site.

This sequence belongs to the intradiol ring-cleavage dioxygenase family. As to quaternary structure, homodimer. Fe(3+) is required as a cofactor.

It carries out the reaction catechol + O2 = cis,cis-muconate + 2 H(+). The enzyme catalyses benzene-1,2,4-triol + O2 = maleylacetate + 2 H(+). Functionally, intradiol ring-cleavage dioxygenase involved in an alternative pathway to the protocatechuic acid pathway since it is active on hydroxyquinol and catechol but not on protocatechuic acid. In Aspergillus niger (strain ATCC MYA-4892 / CBS 513.88 / FGSC A1513), this protein is Intradiol ring-cleavage dioxygenase hqdA.